The chain runs to 449 residues: UDP-N-acetylmuramoylalanine--D-glutamate ligase (449 aa).

118–124 (GTNGKTT) is a binding site for ATP.

This sequence belongs to the MurCDEF family.

The protein resides in the cytoplasm. The enzyme catalyses UDP-N-acetyl-alpha-D-muramoyl-L-alanine + D-glutamate + ATP = UDP-N-acetyl-alpha-D-muramoyl-L-alanyl-D-glutamate + ADP + phosphate + H(+). Its pathway is cell wall biogenesis; peptidoglycan biosynthesis. Cell wall formation. Catalyzes the addition of glutamate to the nucleotide precursor UDP-N-acetylmuramoyl-L-alanine (UMA). In Staphylococcus carnosus (strain TM300), this protein is UDP-N-acetylmuramoylalanine--D-glutamate ligase.